The following is a 60-amino-acid chain: Cytotoxin 7 (60 aa).

4 disulfides stabilise this stretch: Cys-3–Cys-21, Cys-14–Cys-38, Cys-42–Cys-53, and Cys-54–Cys-59.

This sequence belongs to the three-finger toxin family. Short-chain subfamily. Type IA cytotoxin sub-subfamily. In terms of assembly, monomer in solution; Homodimer and oligomer in the presence of negatively charged lipids forming a pore with a size ranging between 20 and 30 Angstroms. Expressed by the venom gland.

It is found in the secreted. The protein resides in the target cell membrane. Its function is as follows. Shows cytolytic activity on many different cells by forming pore in lipid membranes. In vivo, increases heart rate or kills the animal by cardiac arrest. In addition, it binds to heparin with high affinity, interacts with Kv channel-interacting protein 1 (KCNIP1) in a calcium-independent manner, and binds to integrin alpha-V/beta-3 (ITGAV/ITGB3) with moderate affinity. The sequence is that of Cytotoxin 7 from Naja annulifera (Banded Egyptian cobra).